Reading from the N-terminus, the 411-residue chain is Methyl-CpG-binding domain protein 2 (411 aa).

Residues 1–149 (MRAHPGGGRC…GPRATESGKR (149 aa)) form a required for interaction with DHX9 and PRMT5 region. Residues 1 to 158 (MRAHPGGGRC…RMDCPALPPG (158 aa)) form a disordered region. The span at 77 to 95 (GRGRGRGRGRGRGRGRGRG) shows a compositional bias: basic residues. Positions 98-121 (PSGGSGLGGDGGGCGGGGSGGGGA) are enriched in gly residues. Residues 145-213 (ESGKRMDCPA…SSFDFRTGKM (69 aa)) enclose the MBD domain. Phosphoserine is present on S181. The tract at residues 214–241 (MPSKLQKNKQRLRNDPLNQNKGKPDLNT) is disordered. Polar residues predominate over residues 229–241 (PLNQNKGKPDLNT). S407 is subject to Phosphoserine.

Heterodimer with MBD3 (via N-terminus). Component of the MeCP1 complex that contains HDAC1 and HDAC2. Component of the nucleosome remodeling and deacetylase (NuRD) repressor complex, composed of core proteins MTA1, MTA2, MTA3, RBBP4, RBBP7, HDAC1, HDAC2, MBD2, MBD3, and peripherally associated proteins CDK2AP1, CDK2AP2, GATAD2A, GATAD2B, CHD3, CHD4 and CHD5. The exact stoichiometry of the NuRD complex is unknown, and some subunits such as MBD2 and MBD3, GATAD2A and GATAD2B, and CHD3, CHD4 and CHD5 define mutually exclusive NuRD complexes. Interacts with CDK2AP1. Interacts with DHX9. Interacts with DNMT1. Interacts with GATAD2A/p66-alpha. Interacts with GATAD2B/p66-beta. Interacts with GPN1. Interacts with MIZF. Interacts with PRMT5. Interacts with SIN3A. Interacts with SPHK2. As to expression, highly expressed in brain, heart, kidney, stomach, testis and placenta.

It localises to the nucleus. The protein localises to the chromosome. Binds CpG islands in promoters where the DNA is methylated at position 5 of cytosine within CpG dinucleotides. Binds hemimethylated DNA as well. Recruits histone deacetylases and DNA methyltransferases to chromatin. Acts as a component of the histone deacetylase NuRD complex which participates in the remodeling of chromatin. Acts as a transcriptional repressor and plays a role in gene silencing. Functions as a scaffold protein, targeting GATAD2A and GATAD2B to chromatin to promote repression. May enhance the activation of some unmethylated cAMP-responsive promoters. This Homo sapiens (Human) protein is Methyl-CpG-binding domain protein 2.